A 104-amino-acid polypeptide reads, in one-letter code: Phosphoribosyl-ATP pyrophosphatase (104 aa).

The protein belongs to the PRA-PH family.

The protein resides in the cytoplasm. The enzyme catalyses 1-(5-phospho-beta-D-ribosyl)-ATP + H2O = 1-(5-phospho-beta-D-ribosyl)-5'-AMP + diphosphate + H(+). It participates in amino-acid biosynthesis; L-histidine biosynthesis; L-histidine from 5-phospho-alpha-D-ribose 1-diphosphate: step 2/9. The protein is Phosphoribosyl-ATP pyrophosphatase of Methanoregula boonei (strain DSM 21154 / JCM 14090 / 6A8).